Reading from the N-terminus, the 684-residue chain is Glycine--tRNA ligase beta subunit (684 aa).

This sequence belongs to the class-II aminoacyl-tRNA synthetase family. As to quaternary structure, tetramer of two alpha and two beta subunits.

It is found in the cytoplasm. It carries out the reaction tRNA(Gly) + glycine + ATP = glycyl-tRNA(Gly) + AMP + diphosphate. This Pseudomonas putida (strain ATCC 47054 / DSM 6125 / CFBP 8728 / NCIMB 11950 / KT2440) protein is Glycine--tRNA ligase beta subunit.